A 184-amino-acid polypeptide reads, in one-letter code: Transmembrane protein 140 (184 aa).

Over 1 to 12 (MAISRVWRNRLS) the chain is Cytoplasmic. Residues 13–33 (FMAIMILVAMVLSLMSYALLW) form a helical membrane-spanning segment. Topologically, residues 34 to 83 (KAGNLTDVPNLRIGFYNFCLWKEDIGSLECYNFPELGVLGIPQVGLALAR) are extracellular. Asn-37 carries N-linked (GlcNAc...) asparagine glycosylation. A helical membrane pass occupies residues 84–104 (LGVYGALVLAVFVPLPLLLAQ). Residues 105–117 (CNSDEGEWRLAVG) are Cytoplasmic-facing. Residues 118–138 (FLGASSVLLAGGLSLFLFLVW) traverse the membrane as a helical segment. The Extracellular portion of the chain corresponds to 139-149 (KWLRLSFLGPG). A helical membrane pass occupies residues 150 to 170 (FLSLCLAQALLIILLMAMVMF). Topologically, residues 171–184 (PPRDKKDKNHWENC) are cytoplasmic.

It localises to the membrane. The protein is Transmembrane protein 140 (Tmem140) of Rattus norvegicus (Rat).